The sequence spans 199 residues: Guanylate kinase (199 aa).

Residues 20 to 198 (GKLIVLTGPS…ALQAIEVALF (179 aa)) enclose the Guanylate kinase-like domain. 27–34 (GPSGVGKG) is a binding site for ATP.

The protein belongs to the guanylate kinase family.

The protein localises to the cytoplasm. The enzyme catalyses GMP + ATP = GDP + ADP. Essential for recycling GMP and indirectly, cGMP. In Trichormus variabilis (strain ATCC 29413 / PCC 7937) (Anabaena variabilis), this protein is Guanylate kinase.